A 260-amino-acid polypeptide reads, in one-letter code: Universal stress protein PHOS34 (260 aa).

Residues 1–33 (MNPDSDYPHLPNIKIHHPSSPRHSHHHSSSTPS) constitute a chloroplast transit peptide. A disordered region spans residues 1–42 (MNPDSDYPHLPNIKIHHPSSPRHSHHHSSSTPSAATPTPTAG). Positions 14 to 28 (KIHHPSSPRHSHHHS) are enriched in basic residues. P18 lines the ATP pocket. S20 carries the post-translational modification Phosphoserine; by MAPK3 and MAPK6. The segment covering 29-41 (SSTPSAATPTPTA) has biased composition (low complexity). V80 provides a ligand contact to ATP. The disordered stretch occupies residues 92–118 (GPLPLQTPPPPSAATDPGAQPKPSQED). Residues 170-179 (GSRGFGAEKR) and 187-189 (SVS) contribute to the ATP site. Positions 209-260 (RDGPAPPGNVGATREAIVTVKSRRDDDDDDDEDHEAKIAAAASDHHEHIKDE) are disordered. S230 carries the phosphoserine modification. Residues 251–260 (SDHHEHIKDE) are compositionally biased toward basic and acidic residues.

It belongs to the universal stress protein A family. Phosphorylated by MAPK3 and MAPK6 after pathogenic elicitation (e.g. bacterial flg22, Phytophthora infestans zoospores and xylanase).

The protein localises to the plastid. It localises to the chloroplast. The polypeptide is Universal stress protein PHOS34 (Arabidopsis thaliana (Mouse-ear cress)).